The sequence spans 29 residues: Scolopendra 8011.73 Da toxin (29 aa).

In terms of tissue distribution, expressed by the venom gland.

The protein resides in the secreted. This chain is Scolopendra 8011.73 Da toxin, found in Scolopendra viridicornis nigra (Brazilian giant centipede).